A 1342-amino-acid chain; its full sequence is DNA-directed RNA polymerase subunit beta (1342 aa).

The protein belongs to the RNA polymerase beta chain family. In terms of assembly, the RNAP catalytic core consists of 2 alpha, 1 beta, 1 beta' and 1 omega subunit. When a sigma factor is associated with the core the holoenzyme is formed, which can initiate transcription.

It catalyses the reaction RNA(n) + a ribonucleoside 5'-triphosphate = RNA(n+1) + diphosphate. Functionally, DNA-dependent RNA polymerase catalyzes the transcription of DNA into RNA using the four ribonucleoside triphosphates as substrates. The protein is DNA-directed RNA polymerase subunit beta of Cronobacter sakazakii (strain ATCC BAA-894) (Enterobacter sakazakii).